Reading from the N-terminus, the 111-residue chain is Protein BEX3 (111 aa).

Residues 1 to 63 (MANIHQENEE…RQINDGMGGD (63 aa)) form a disordered region. Residues 68–93 (EIFMEEMREIRRKLRELQLRNCLRIL) form an interaction with p75NTR/NGFR region. Residues 68 to 111 (EIFMEEMREIRRKLRELQLRNCLRILMGELSNHHDHHDEFCLMP) are interaction with 14-3-3 epsilon. A Nuclear export signal motif is present at residues 77 to 87 (IRRKLRELQLR). The segment at 100–104 (HHDHH) is his cluster. Residue Cys-108 participates in Zn(2+) binding.

The protein belongs to the BEX family. In terms of assembly, self-associates. Binds to the DEATH domain of p75NTR/NGFR. Interacts with 14-3-3 epsilon (YWHAE). Interacts with DIABLO/SMAC. In terms of processing, ubiquitinated. Degraded by the proteasome. As to expression, found in ovarian granulosa cells, testis, prostate and seminal vesicle tissue. High levels also detected in liver.

It is found in the nucleus. The protein resides in the cytoplasm. It localises to the cytosol. Functionally, may be a signaling adapter molecule involved in NGFR/p75NTR-mediated apoptosis induced by NGF. Plays a role in zinc-triggered neuronal death. In absence of reductive stress, acts as a pseudosubstrate for the CRL2(FEM1B) complex: associates with FEM1B via zinc, thereby preventing association between FEM1B and its substrates. The sequence is that of Protein BEX3 from Homo sapiens (Human).